The following is a 137-amino-acid chain: Small ribosomal subunit protein uS19 (137 aa).

Belongs to the universal ribosomal protein uS19 family.

Its function is as follows. Protein S19 forms a complex with S13 that binds strongly to the 16S ribosomal RNA. This Methanospirillum hungatei JF-1 (strain ATCC 27890 / DSM 864 / NBRC 100397 / JF-1) protein is Small ribosomal subunit protein uS19.